The primary structure comprises 873 residues: Alanine--tRNA ligase (873 aa).

H563, H567, C665, and H669 together coordinate Zn(2+).

The protein belongs to the class-II aminoacyl-tRNA synthetase family. The cofactor is Zn(2+).

The protein localises to the cytoplasm. The catalysed reaction is tRNA(Ala) + L-alanine + ATP = L-alanyl-tRNA(Ala) + AMP + diphosphate. Its function is as follows. Catalyzes the attachment of alanine to tRNA(Ala) in a two-step reaction: alanine is first activated by ATP to form Ala-AMP and then transferred to the acceptor end of tRNA(Ala). Also edits incorrectly charged Ser-tRNA(Ala) and Gly-tRNA(Ala) via its editing domain. In Parabacteroides distasonis (strain ATCC 8503 / DSM 20701 / CIP 104284 / JCM 5825 / NCTC 11152), this protein is Alanine--tRNA ligase.